A 353-amino-acid polypeptide reads, in one-letter code: Guanine nucleotide-binding protein G(q) subunit alpha (353 aa).

Residues Cys3 and Cys4 are each lipidated (S-palmitoyl cysteine). The region spanning 32-353 (RELKLLLLGT…QLNLKEYNLV (322 aa)) is the G-alpha domain. The interval 35–48 (KLLLLGTGESGKST) is G1 motif. GTP-binding positions include 40–47 (GTGESGKS), 174–180 (LRVRVPT), 199–203 (DVGGQ), 268–271 (NKKD), and Ala325. Positions 47 and 180 each coordinate Mg(2+). Residues 172 to 180 (DILRVRVPT) form a G2 motif region. Residues 195–204 (FRMVDVGGQR) form a G3 motif region. The segment at 264–271 (ILFLNKKD) is G4 motif. Positions 323–328 (TCATDT) are G5 motif.

Belongs to the G-alpha family. G(q) subfamily. As to quaternary structure, g proteins are composed of 3 units; alpha, beta and gamma. The alpha chain contains the guanine nucleotide binding site.

Guanine nucleotide-binding proteins (G proteins) are involved as modulators or transducers in various transmembrane signaling systems. In Lymnaea stagnalis (Great pond snail), this protein is Guanine nucleotide-binding protein G(q) subunit alpha.